A 731-amino-acid chain; its full sequence is Two pore channel protein 2 (731 aa).

Topologically, residues 1–68 are cytoplasmic; it reads MAAEEQPLLG…RWYYSNVCQR (68 aa). Residues 69–89 traverse the membrane as a helical segment; it reads VLGFIIFLILILAFVEVPSSF. At 90 to 111 the chain is on the extracellular side; sequence TKTADVRYRSQPWQPPCGLTET. The helical transmembrane segment at 112–132 threads the bilayer; that stretch reads IEAFCLLAFLVDLSVKGYLVG. Topologically, residues 133–139 are cytoplasmic; it reads QAQLQQN. A helical membrane pass occupies residues 140 to 160; that stretch reads LWLLAYFMVLVVSVVDWIVSL. Residues 161-167 lie on the Extracellular side of the membrane; the sequence is SLACEEP. The helical transmembrane segment at 168-188 threads the bilayer; the sequence is LRMRRLLRPFFLLQNSSMMKK. Positions 187-191 are interaction with phosphatidylinositol 3,5-bisphosphate; it reads KKTLK. The Cytoplasmic segment spans residues 189–203; the sequence is TLKCIRWSLPEMASV. Residues 204 to 224 form a helical membrane-spanning segment; the sequence is GLLLAIHLCLFTIIGMLLFTI. Over 225 to 238 the chain is Extracellular; the sequence is GEKDEAQDQERLAY. Residues 239–263 constitute an intramembrane region (helical; Pore-forming); it reads FRNLPEALTSLLVLLTTSNNPDVMI. The Extracellular portion of the chain corresponds to 264–270; sequence PAYTQNR. Residues 271–291 traverse the membrane as a helical segment; sequence AFALFFIVFTLIGSLFLMNLL. Over 292 to 417 the chain is Cytoplasmic; that stretch reads TAIIYNQFRG…TAQFIFSHHY (126 aa). Residues 418–438 form a helical membrane-spanning segment; the sequence is FDYLGNLVALGNLLSICVFLV. At 439–449 the chain is on the extracellular side; that stretch reads LDSDLLPGERD. A helical transmembrane segment spans residues 450 to 470; sequence DFVLGILDYIFILYYLLELLF. The Cytoplasmic portion of the chain corresponds to 471-486; the sequence is KVFALGLPGYLSYHSN. The chain crosses the membrane as a helical span at residues 487 to 507; that stretch reads VFDGLLTIILLVSEICTLAVY. The Extracellular segment spans residues 508 to 524; that stretch reads RLPHSGWKPEQYGPLSL. A helical membrane pass occupies residues 525–542; it reads WDMTRLMNTLIVFRFLRI. The Cytoplasmic portion of the chain corresponds to 543–564; sequence IPNIKPMAEVANTILGLIPNLR. A helical transmembrane segment spans residues 565-585; the sequence is AFGGILVVAYYVFAMIGINLF. Residues 586–618 are Extracellular-facing; the sequence is RGVIVPPGNSSLVPDNNSAVCGSFEQLGYWPNN. Asparagine 594 and asparagine 601 each carry an N-linked (GlcNAc...) asparagine glycan. An intramembrane region (helical; Pore-forming) is located at residues 619 to 641; it reads FDDFAAALITLWNVMVVNNWQVI. The Extracellular portion of the chain corresponds to 642–656; that stretch reads LEAYKRYAGPWSMVY. The chain crosses the membrane as a helical span at residues 657–677; the sequence is FVLWWLVSSVIWINLFLALLL. Residues 678–731 are Cytoplasmic-facing; that stretch reads ENFLHRWDPQGHKQLLVGTKQMSVELMFRDILEEPKEEELMEKLHKHPHLHLCR.

Belongs to the calcium channel alpha-1 subunit (TC 1.A.1.11) family. Two pore calcium channel subfamily. As to quaternary structure, homodimer. Interacts with LRRK2. Interacts with HAX1. Interacts with MTOR; the interaction is required for TPCN2 ATP sensitivity. Found in a complex with LSM12, TPCN1 and TPCN2. Interacts with LSM12. In terms of processing, N-glycosylated. In terms of tissue distribution, widely expressed. Highly expressed in macrophages. Expressed in pigmented cells.

The protein localises to the late endosome membrane. It localises to the lysosome membrane. The protein resides in the melanosome membrane. The enzyme catalyses Ca(2+)(in) = Ca(2+)(out). It carries out the reaction Na(+)(in) = Na(+)(out). With respect to regulation, regulated by Mg(2+) ions, cytosolic Mg(2+) selectively inhibits outward current while lysosomal Mg(2+) modestly inhibits both the outward and inward currents. In the absence of Mg(2+), NAADP readily activates TPCN2, with properties similar to PI(3,5)P2. Na(+) current is inhibited by ATP in a MTORC-dependent manner. ATP sensitivity is independent of PI(3,5)P2. Both current elicited by PI(3,5)P2 as well as NAADP are inhibited by tetrandrine. Functionally, intracellular channel initially characterized as a non-selective Ca(2+)-permeable channel activated by NAADP (nicotinic acid adenine dinucleotide phosphate), it is also a highly-selective Na(+) channel activated directly by PI(3,5)P2 (phosphatidylinositol 3,5-bisphosphate). Localizes to the lysosomal and late endosome membranes where it regulates organellar membrane excitability, membrane trafficking, and pH homeostasis. Is associated with a plethora of physiological processes, including mTOR-dependent nutrient sensing, skin pigmentation and autophagy. Ion selectivity is not fixed but rather agonist-dependent and under defined ionic conditions, can be readily activated by both NAADP and PI(3,5)P2. As calcium channel, it increases the pH in the lysosomal lumen, as sodium channel, it promotes lysosomal exocytosis. Plays a crucial role in endolysosomal trafficking in the endolysosomal degradation pathway and is potentially involved in the homeostatic control of many macromolecules and cell metabolites. Also expressed in melanosomes of pigmented cells where mediates a Ca(2+) channel and/or PI(3,5)P2-activated melanosomal Na(+) channel to acidify pH and inhibit tyrosinase activity required for melanogenesis and pigmentation. Unlike the voltage-dependent TPCN1, TPCN2 is voltage independent and can be activated solely by PI(3,5)P2 binding. In contrast, PI(4,5)P2, PI(3,4)P2, PI(3)P and PI(5)P have no obvious effect on channel activation. (Microbial infection) During Ebola virus (EBOV) infection, controls the movement of endosomes containing virus particles and is required by EBOV to escape from the endosomal network into the cell cytoplasm. This Mus musculus (Mouse) protein is Two pore channel protein 2.